Consider the following 328-residue polypeptide: Malate dehydrogenase (328 aa).

12–18 (GAAGQIG) contacts NAD(+). Substrate is bound by residues R95 and R101. NAD(+)-binding positions include N108, Q115, and 132-134 (VGN). Residues N134 and R165 each contribute to the substrate site. The active-site Proton acceptor is H190.

Belongs to the LDH/MDH superfamily. MDH type 2 family.

The enzyme catalyses (S)-malate + NAD(+) = oxaloacetate + NADH + H(+). Its function is as follows. Catalyzes the reversible oxidation of malate to oxaloacetate. This is Malate dehydrogenase from Polaromonas sp. (strain JS666 / ATCC BAA-500).